A 607-amino-acid chain; its full sequence is MRMWLGYTLALLAGLHGSNVEGTNEVEKTRKRFEKAFSCKLSDEEVEIIRKSLVEVSGLETRILLPLIFHDRKLVASPVAKYRDINEREREYVEKVVRLLPYLAWRSVALVCAPGNWTLFLMYDVFKTTSFKDFDPVVLYRESKGRSRMRLMDLVVEIFKRNNCMVSRFGQGLAREAEVRIQGISSSLSAMERKREEEMLRKIKEHGERLCTKKNQEQIIEAQKIMCDACEYIWKREENRKSFVMGAHLKHLYLRMIDPSNDVEGPLLYYIDHEKMINTYEKYKSISIVAELVKKVVIEYEDINDESISSAVHEVKERESEEKRREEESLRNAEELLRMEEREKGEGKGPNGKGKKKRGKKGAGKAKEESKEEDRGEEEEESVEAEVPVEEMAAEGARPKKKRSKERSKGEDSCYRVHKRVLRWMKSVERIKYELDNGKEEKWKGKSMEEIEGQKVLHDIIEVLKLLRSRECDKFFVRTGKYMKGGSERWKMVALGILDEGGEKKVGNVEVGLFKGKREESVVYHLMFKPTSSEKTGKGSSPSFGKGDDVDEIEEDGSSDMSGFQYPPGVRSEVVKDKGEFRIVWRNPKDTSSVLRSLAVLQIPEIQ.

2 disordered regions span residues 312 to 410 and 531 to 570; these read VHEV…RSKG and TSSE…PPGV. A compositionally biased stretch (basic and acidic residues) spans 313–347; that stretch reads HEVKERESEEKRREEESLRNAEELLRMEEREKGEG. The span at 353–364 shows a compositional bias: basic residues; the sequence is KGKKKRGKKGAG. Residues 365–374 are compositionally biased toward basic and acidic residues; it reads KAKEESKEED. Over residues 375-393 the composition is skewed to acidic residues; the sequence is RGEEEEESVEAEVPVEEMA. The span at 531 to 543 shows a compositional bias: polar residues; the sequence is TSSEKTGKGSSPS. A compositionally biased stretch (acidic residues) spans 549–558; the sequence is DVDEIEEDGS.

The protein belongs to the UPF0329 family.

This chain is UPF0329 protein ECU06_1610, found in Encephalitozoon cuniculi (strain GB-M1) (Microsporidian parasite).